The primary structure comprises 313 residues: Protein FixB (313 aa).

255–283 contributes to the FAD binding site; the sequence is LYLAVGISGQIQHMVGANASQTIFAINKD.

The protein belongs to the ETF alpha-subunit/FixB family. Heterodimer of FixA and FixB.

The protein operates within amine and polyamine metabolism; carnitine metabolism. Its function is as follows. Required for anaerobic carnitine reduction. May bring reductant to CaiA. The protein is Protein FixB of Escherichia coli O157:H7.